A 407-amino-acid polypeptide reads, in one-letter code: Protein COS9 (407 aa).

The next 3 membrane-spanning stretches (helical) occupy residues 75–95 (TWLL…IKSI), 98–118 (IFPF…LPNI), and 261–281 (IFNL…YVSW).

Belongs to the DUP/COS family.

It is found in the membrane. In Saccharomyces cerevisiae (strain ATCC 204508 / S288c) (Baker's yeast), this protein is Protein COS9 (COS9).